Consider the following 136-residue polypeptide: Large ribosomal subunit protein uL16c (136 aa).

Belongs to the universal ribosomal protein uL16 family. In terms of assembly, part of the 50S ribosomal subunit.

Its subcellular location is the plastid. It is found in the chloroplast. This Chlamydomonas sp. (strain WXM) protein is Large ribosomal subunit protein uL16c.